The chain runs to 350 residues: (S)-tetrahydroprotoberberine N-methyltransferase (350 aa).

Positions 91, 129, 153, 157, 179, 180, and 195 each coordinate S-adenosyl-L-methionine. Residue C325 is part of the active site.

This sequence belongs to the CFA/CMAS family. Homodimer.

It localises to the cytoplasm. The enzyme catalyses (S)-stylopine + S-adenosyl-L-methionine = (S)-cis-N-methylstylopine + S-adenosyl-L-homocysteine. The catalysed reaction is (S)-tetrahydropalmatine + S-adenosyl-L-methionine = (S)-cis-N-methyltetrahydropalmatine + S-adenosyl-L-homocysteine. It carries out the reaction (S)-canadine + S-adenosyl-L-methionine = (S)-cis-N-methylcanadine + S-adenosyl-L-homocysteine. It catalyses the reaction (S)-scoulerine + S-adenosyl-L-methionine = (S)-cis-N-methylscoulerine + S-adenosyl-L-homocysteine. It participates in alkaloid biosynthesis. Functionally, N-methyltransferase with a broad substrate range, accepting protoberberine alkaloids (R,S)-stylopine, (R,S)-nandinine and (R,S)-tetrahydropalmatine, and to a lesser extent (R,S)-canadine, (R,S)-tetrahydrogroenlandicine (cheilanthifoline) and (S)-scoulerine. In Eschscholzia californica (California poppy), this protein is (S)-tetrahydroprotoberberine N-methyltransferase.